Reading from the N-terminus, the 578-residue chain is GTP diphosphokinase CRSH3, chloroplastic (578 aa).

The transit peptide at 1–45 (MANAGVNETVAVAVAIDAPGVGHDHGAAGEVRRPSTRRLAPAGSG) directs the protein to the chloroplast. Positions 99–199 (SVSRALVVAA…LELAVKLDAM (101 aa)) constitute an HD domain. 2 EF-hand domains span residues 468-503 (ATAG…LGAG) and 506-537 (DAEE…VKLK). Ca(2+)-binding residues include D481, N483, D485, R487, E492, D515, N517, D519, S521, and E526.

This sequence belongs to the RelA/SpoT family. Expressed in roots and shoots.

The protein resides in the plastid. The protein localises to the chloroplast. The enzyme catalyses GTP + ATP = guanosine 3'-diphosphate 5'-triphosphate + AMP. With respect to regulation, activated by calcium. Its function is as follows. Possesses calcium-dependent ppGpp (guanosine 3'-diphosphate 5'-diphosphate) synthetase activity in vitro and is able to functionally complement E.coli relA mutants. May be involved in a rapid plant ppGpp-mediated response to pathogens and other stresses. This Oryza sativa subsp. japonica (Rice) protein is GTP diphosphokinase CRSH3, chloroplastic.